Here is a 526-residue protein sequence, read N- to C-terminus: Delayed-rectifier potassium channel regulatory subunit KCNS1 (526 aa).

Over 1-217 the chain is Cytoplasmic; sequence MLMLLVRGTH…LTMENPGYSL (217 aa). Residues 218-239 form a helical membrane-spanning segment; sequence PSKLFSCVSISVVLASIAAMCI. The Extracellular segment spans residues 240–270; that stretch reads HSLPEYQAREAAAAVAAVAAGRSPEGVRDDP. The helical transmembrane segment at 271-293 threads the bilayer; sequence VLRRLEYFCIAWFSFEVSSRLLL. Residues 294–304 are Cytoplasmic-facing; that stretch reads APSTRNFFCHP. The chain crosses the membrane as a helical span at residues 305–322; it reads LNLIDIVSVLPFYLTLLA. Over 323–337 the chain is Extracellular; it reads GVALGDQGGKEFGHL. Residues 338–358 form a helical; Voltage-sensor membrane-spanning segment; the sequence is GKVVQVFRLMRIFRVLKLARH. Residues 359 to 373 lie on the Cytoplasmic side of the membrane; that stretch reads STGLRSLGATLKHSY. Residues 374–395 form a helical membrane-spanning segment; that stretch reads REVGILLLYLAVGVSVFSGVAY. Over 396 to 408 the chain is Extracellular; that stretch reads TAEKEEDVGFNTI. Residues 409 to 420 constitute an intramembrane region (helical); that stretch reads PACWWWGTVSMT. Residues 421–426 carry the Selectivity filter motif; that stretch reads TVGYGD. An intramembrane segment occupies 421–428; sequence TVGYGDVV. The Extracellular segment spans residues 429–435; it reads PVTVAGK. Residues 436–464 traverse the membrane as a helical segment; the sequence is LAASGCILGGILVVALPITIIFNKFSHFY. The Cytoplasmic portion of the chain corresponds to 465 to 526; the sequence is RRQKALEAAV…PSEPPHPQMY (62 aa). The interval 491–526 is disordered; the sequence is GVSEASLETSRETSQEGRSADLESQAPSEPPHPQMY. Residues 499–511 show a composition bias toward basic and acidic residues; the sequence is TSRETSQEGRSAD.

It belongs to the potassium channel family. S (TC 1.A.1.2) subfamily. Kv9.1/KCNS1 sub-subfamily. In terms of assembly, heterotetramer with KCNB1. Heterotetramer with KCNB2. Does not form homomultimers.

The protein resides in the cell membrane. Functionally, potassium channel regulatory subunit that modulate the delayed rectifier voltage-gated potassium channel activity of KCNB1 and KCNB2 by altering their kinetics, expression levels, and shifting the half-inactivation potential to more polarized values. While it does not form functional channels on its own, it can form functional heterotetrameric channels with KCNB1 and KCNB2. Each regulatory subunit has unique regulatory properties that can lead to extensive inhibition, significant changes in kinetics, and/or substantial shifts in the voltage dependencies of the inactivation process. The chain is Delayed-rectifier potassium channel regulatory subunit KCNS1 from Pongo abelii (Sumatran orangutan).